The primary structure comprises 186 residues: Oligoribonuclease (186 aa).

One can recognise an Exonuclease domain in the interval 12-175; the sequence is LIWIDLEMTG…DDIKDSIKEL (164 aa). Tyrosine 133 is an active-site residue.

Belongs to the oligoribonuclease family.

It is found in the cytoplasm. Its function is as follows. 3'-to-5' exoribonuclease specific for small oligoribonucleotides. This Wigglesworthia glossinidia brevipalpis protein is Oligoribonuclease.